Reading from the N-terminus, the 192-residue chain is Thymidylate kinase (192 aa).

Residue 7 to 14 (GVDGVGKS) participates in ATP binding.

It belongs to the thymidylate kinase family.

The catalysed reaction is dTMP + ATP = dTDP + ADP. Functionally, phosphorylation of dTMP to form dTDP in both de novo and salvage pathways of dTTP synthesis. The protein is Thymidylate kinase of Campylobacter fetus subsp. fetus (strain 82-40).